The sequence spans 261 residues: MRYLKKVTIYISLLILTIFIGGCGFINKEDSKETEIKQNFNKMLNVYPTKNLEDFYDKEGFRDEEFDKGDKGTWIIRSEMTKQPKGKIMTSRGMVLYINRNTRTAKGYFLIDEIKDDNSGRPIENEKKYPVKMNHNKIFPTKPISDDKLKKEIENFKFFVQYGDFKNLKDYKDGEISYNPNVPSYSAQYQLNNNDNNVKQLRKRYDIPTNQAPKLLLKGDGDLKGSSVGSKNLEFTFVENKEENIFFTDAVQFTPSEDDES.

The N-terminal stretch at 1 to 22 (MRYLKKVTIYISLLILTIFIGG) is a signal peptide. The N-palmitoyl cysteine moiety is linked to residue Cys23. Residue Cys23 is the site of S-diacylglycerol cysteine attachment.

The protein belongs to the staphylococcal tandem lipoprotein family.

The protein resides in the cell membrane. This is an uncharacterized protein from Staphylococcus epidermidis (strain ATCC 35984 / DSM 28319 / BCRC 17069 / CCUG 31568 / BM 3577 / RP62A).